Here is a 90-residue protein sequence, read N- to C-terminus: Defensin-like protein 293 (90 aa).

Residues 1 to 26 form the signal peptide; the sequence is MTSRAKSLFIFFFLISCTFMLLETDA. Disulfide bonds link cysteine 63-cysteine 83, cysteine 69-cysteine 88, and cysteine 75-cysteine 90.

It belongs to the DEFL family.

The protein localises to the secreted. This is Defensin-like protein 293 from Arabidopsis thaliana (Mouse-ear cress).